We begin with the raw amino-acid sequence, 360 residues long: Lipid-A-disaccharide synthase (360 aa).

Belongs to the LpxB family.

It carries out the reaction a lipid X + a UDP-2-N,3-O-bis[(3R)-3-hydroxyacyl]-alpha-D-glucosamine = a lipid A disaccharide + UDP + H(+). Its pathway is bacterial outer membrane biogenesis; LPS lipid A biosynthesis. In terms of biological role, condensation of UDP-2,3-diacylglucosamine and 2,3-diacylglucosamine-1-phosphate to form lipid A disaccharide, a precursor of lipid A, a phosphorylated glycolipid that anchors the lipopolysaccharide to the outer membrane of the cell. The sequence is that of Lipid-A-disaccharide synthase from Helicobacter acinonychis (strain Sheeba).